An 81-amino-acid chain; its full sequence is uncharacterized protein (81 aa).

Belongs to the ycf70 family.

The protein localises to the plastid. The protein resides in the chloroplast. This is an uncharacterized protein from Saccharum officinarum (Sugarcane).